The chain runs to 399 residues: Acetate kinase (399 aa).

Mg(2+) is bound at residue asparagine 7. Lysine 14 is a binding site for ATP. Residue arginine 91 participates in substrate binding. Aspartate 148 functions as the Proton donor/acceptor in the catalytic mechanism. ATP contacts are provided by residues 208-212 (HLGNG), 283-285 (DFR), and 331-335 (GLGEN). Glutamate 384 contacts Mg(2+).

Belongs to the acetokinase family. Homodimer. It depends on Mg(2+) as a cofactor. Mn(2+) serves as cofactor.

It localises to the cytoplasm. The enzyme catalyses acetate + ATP = acetyl phosphate + ADP. Its pathway is metabolic intermediate biosynthesis; acetyl-CoA biosynthesis; acetyl-CoA from acetate: step 1/2. In terms of biological role, catalyzes the formation of acetyl phosphate from acetate and ATP. Can also catalyze the reverse reaction. The sequence is that of Acetate kinase from Desulfitobacterium hafniense (strain Y51).